A 767-amino-acid polypeptide reads, in one-letter code: MENSILLHSGNQFHPNLPLLALRPKKLSLIHGSSREQMWRIKRVKATGENSGEAASADESNDALQVTIEKSKKVLAMQQDLLQQIAERRKVVSSIKSSLANAKGTYDGGSGSLSDVDIPDVDKDYNVTVPSTAATPITDVDKNTPPAISQDFVESKREIKRDLADERAPPLSRSSITASSQISSTVSSKRTLNVPPETPKSSQETLLDVNSRKSLVDVPGKKIQSYMPSLRKESSASHVEQRNENLEGSSAEANEETEDPVNIDEKPPPLAGTNVMNIILVASECAPWSKTGGLGDVAGALPKALARRGHRVMVVAPRYDNYPEPQDSGVRKIYKVDGQDVEVTYFQAFIDGVDFVFIDSHMFRHIGNNIYGGNRVDILKRMVLFCKAAIEVPWHVPCGGVCYGDGNLVFIANDWHTALLPVYLKAYYRDNGIMNYTRSVLVIHNIAHQGRGPLEDFSYVDLPPHYMDPFKLYDPVGGEHFNIFAAGLKTADRVVTVSHGYSWELKTSQGGWGLHQIINENDWKLQGIVNGIDTKEWNPELDVHLQSDGYMNYSLDTLQTGKPQCKAALQKELGLPVRDDVPLIGFIGRLDPQKGVDLIAEAVPWMMGQDVQLVMLGTGRRDLEQMLRQFECQHNDKIRGWVGFSVKTSHRITAGADILLMPSRFEPCGLNQLYAMKYGTIPVVHAVGGLRDTVQPFDPFNESGLGWTFSRAEASQLIHALGNCLLTYREYKKSWEGIQTRCMTQDLSWDNAAQNYEEVLIAAKYQW.

Residues 1–45 (MENSILLHSGNQFHPNLPLLALRPKKLSLIHGSSREQMWRIKRVK) constitute a chloroplast transit peptide. 2 disordered regions span residues 160–204 (KRDL…SSQE) and 226–268 (YMPS…EKPP). The span at 172 to 188 (SRSSITASSQISSTVSS) shows a compositional bias: low complexity. Over residues 230 to 245 (LRKESSASHVEQRNEN) the composition is skewed to basic and acidic residues. Acidic residues predominate over residues 253 to 262 (ANEETEDPVN). Lys-290 lines the ADP-alpha-D-glucose pocket.

The protein belongs to the glycosyltransferase 1 family. Bacterial/plant glycogen synthase subfamily.

The protein localises to the plastid. It localises to the chloroplast. It is found in the amyloplast. The catalysed reaction is [(1-&gt;4)-alpha-D-glucosyl](n) + ADP-alpha-D-glucose = [(1-&gt;4)-alpha-D-glucosyl](n+1) + ADP + H(+). It functions in the pathway glycan biosynthesis; starch biosynthesis. Accounts for only 10 to 15% of the total soluble starch synthase activity in tubers. The protein is Granule-bound starch synthase 2, chloroplastic/amyloplastic (SS2) of Solanum tuberosum (Potato).